The primary structure comprises 353 residues: Phospho-N-acetylmuramoyl-pentapeptide-transferase (353 aa).

Helical transmembrane passes span 24–44 (LGFFIAFFLTLFLMPKFILWA), 66–86 (TPTMGGIVFVFATIVASVLCA), 88–108 (LSNLYVLLGIIVLVGFSFVGF), 129–149 (FGMLFILSLIVSVLLSLKGLD), 160–180 (PLFEMPTMLAVGFWVLVFLST), 192–212 (GLASVPSIFTLLSLSIFVYVA), 229–249 (VGELFVISLALVGSLFGFLWY), 256–276 (VFMGDSGSLAIGGFIAYNAIV), 281–301 (ILLVLMGSIFVIETLSVILQV), and 330–350 (KVIVRFWIISMLSNLVALLSL).

Belongs to the glycosyltransferase 4 family. MraY subfamily. Mg(2+) serves as cofactor.

It localises to the cell inner membrane. The enzyme catalyses UDP-N-acetyl-alpha-D-muramoyl-L-alanyl-gamma-D-glutamyl-meso-2,6-diaminopimeloyl-D-alanyl-D-alanine + di-trans,octa-cis-undecaprenyl phosphate = di-trans,octa-cis-undecaprenyl diphospho-N-acetyl-alpha-D-muramoyl-L-alanyl-D-glutamyl-meso-2,6-diaminopimeloyl-D-alanyl-D-alanine + UMP. It participates in cell wall biogenesis; peptidoglycan biosynthesis. Functionally, catalyzes the initial step of the lipid cycle reactions in the biosynthesis of the cell wall peptidoglycan: transfers peptidoglycan precursor phospho-MurNAc-pentapeptide from UDP-MurNAc-pentapeptide onto the lipid carrier undecaprenyl phosphate, yielding undecaprenyl-pyrophosphoryl-MurNAc-pentapeptide, known as lipid I. This Helicobacter pylori (strain J99 / ATCC 700824) (Campylobacter pylori J99) protein is Phospho-N-acetylmuramoyl-pentapeptide-transferase.